An 80-amino-acid polypeptide reads, in one-letter code: Toxin Acra I-2 (80 aa).

Residues 1-22 (MMKLALFSIIVILFSLIGSIHG) form the signal peptide. Positions 25 to 80 (VPGNYPLDSSGNKYPCTVLGDNQSCIDVCKKHGVKYGYCYSFKCWCEFLEDKNVSI) constitute an LCN-type CS-alpha/beta domain. Intrachain disulfides connect cysteine 40–cysteine 63, cysteine 49–cysteine 68, and cysteine 53–cysteine 70.

Expressed by the venom gland.

It localises to the secreted. In terms of biological role, probable neurotoxin that inhibits ion channels. Is toxic to mice. Is about 2.8% of the total protein in the venom. The protein is Toxin Acra I-2 of Androctonus crassicauda (Arabian fat-tailed scorpion).